A 230-amino-acid polypeptide reads, in one-letter code: Large ribosomal subunit protein uL1 (230 aa).

The protein belongs to the universal ribosomal protein uL1 family. As to quaternary structure, part of the 50S ribosomal subunit.

Functionally, binds directly to 23S rRNA. The L1 stalk is quite mobile in the ribosome, and is involved in E site tRNA release. Its function is as follows. Protein L1 is also a translational repressor protein, it controls the translation of the L11 operon by binding to its mRNA. The polypeptide is Large ribosomal subunit protein uL1 (Rubrobacter xylanophilus (strain DSM 9941 / JCM 11954 / NBRC 16129 / PRD-1)).